We begin with the raw amino-acid sequence, 250 residues long: 5-oxoprolinase subunit A (250 aa).

It belongs to the LamB/PxpA family. As to quaternary structure, forms a complex composed of PxpA, PxpB and PxpC.

The catalysed reaction is 5-oxo-L-proline + ATP + 2 H2O = L-glutamate + ADP + phosphate + H(+). Its function is as follows. Catalyzes the cleavage of 5-oxoproline to form L-glutamate coupled to the hydrolysis of ATP to ADP and inorganic phosphate. This chain is 5-oxoprolinase subunit A, found in Paraburkholderia phytofirmans (strain DSM 17436 / LMG 22146 / PsJN) (Burkholderia phytofirmans).